Reading from the N-terminus, the 168-residue chain is Phosphopantetheine adenylyltransferase (168 aa).

Substrate is bound at residue T13. Residues 13 to 14 (TF) and H21 each bind ATP. Residues K45, L78, and R92 each contribute to the substrate site. ATP contacts are provided by residues 93–95 (GLR), E103, and 128–134 (TQFISSG).

It belongs to the bacterial CoaD family. Homohexamer. Mg(2+) serves as cofactor.

It localises to the cytoplasm. The catalysed reaction is (R)-4'-phosphopantetheine + ATP + H(+) = 3'-dephospho-CoA + diphosphate. The protein operates within cofactor biosynthesis; coenzyme A biosynthesis; CoA from (R)-pantothenate: step 4/5. Functionally, reversibly transfers an adenylyl group from ATP to 4'-phosphopantetheine, yielding dephospho-CoA (dPCoA) and pyrophosphate. The polypeptide is Phosphopantetheine adenylyltransferase (Wolbachia sp. subsp. Drosophila simulans (strain wRi)).